The chain runs to 136 residues: Small ribosomal subunit protein uS9 (136 aa).

The tract at residues 97-136 (SPDNRKPLKTEGHLSRDPRAKERRKYGLKKARKAPQFSKR) is disordered. Basic and acidic residues predominate over residues 98-116 (PDNRKPLKTEGHLSRDPRA). Positions 117-136 (KERRKYGLKKARKAPQFSKR) are enriched in basic residues.

Belongs to the universal ribosomal protein uS9 family.

The polypeptide is Small ribosomal subunit protein uS9 (Prochlorococcus marinus (strain AS9601)).